A 255-amino-acid polypeptide reads, in one-letter code: MERWLQLHVWSKDQQDQDQEHLLDEKIPINRAWMDFLQMSPFLKRKLVTLLETVAKLRTSTVVYPGEERVFSWSWLCEPTQVKVIILGQDPYHGGQATGLAFSVSKTDPVPPSLRNIFLEVSACDSQFAVPLHGCLNNWARQGVLLLNTILTVEKGKPGSHSDLGWIWFTNYIISCLSNQLDHCVFMLWGSKAIEKASLINTNKHLVLKSQHPSPLAARSNRPSLWPKFLGCGHFKQANEYLELHGKCPVDWNLD.

The Proton acceptor role is filled by aspartate 90.

The protein belongs to the uracil-DNA glycosylase (UDG) superfamily. UNG family.

It localises to the host nucleus. The enzyme catalyses Hydrolyzes single-stranded DNA or mismatched double-stranded DNA and polynucleotides, releasing free uracil.. Its function is as follows. Excises uracil residues from the DNA which can arise as a result of misincorporation of dUMP residues by DNA polymerase or deamination of cytosines. Therefore may reduce deleterious uracil incorporation into the viral genome, particularly in terminally differentiated cells which lack DNA repair enzymes. This Equine herpesvirus 2 (strain 86/87) (EHV-2) protein is Uracil-DNA glycosylase.